The primary structure comprises 103 residues: High-potential iron-sulfur protein (103 aa).

The first 28 residues, 1–28, serve as a signal peptide directing secretion; it reads MSNRRLFLKSIPIMAAAGAVGMAGLARA. 4 residues coordinate [4Fe-4S] cluster: C66, C69, C82, and C96.

The protein belongs to the high-potential iron-sulfur protein (HiPIP) family. Homodimer.

The protein localises to the periplasm. Functionally, specific class of high-redox-potential 4Fe-4S ferredoxins. Functions in anaerobic electron transport in most purple and in some other photosynthetic bacteria and in at least one genus (Paracoccus) of halophilic, denitrifying bacteria. The polypeptide is High-potential iron-sulfur protein (hip) (Ralstonia nicotianae (strain ATCC BAA-1114 / GMI1000) (Ralstonia solanacearum)).